A 57-amino-acid chain; its full sequence is DNA-directed RNA polymerase subunit Rpo6 (57 aa).

The protein belongs to the archaeal Rpo6/eukaryotic RPB6 RNA polymerase subunit family. In terms of assembly, part of the RNA polymerase complex.

The protein resides in the cytoplasm. The catalysed reaction is RNA(n) + a ribonucleoside 5'-triphosphate = RNA(n+1) + diphosphate. Functionally, DNA-dependent RNA polymerase (RNAP) catalyzes the transcription of DNA into RNA using the four ribonucleoside triphosphates as substrates. The protein is DNA-directed RNA polymerase subunit Rpo6 of Methanocaldococcus jannaschii (strain ATCC 43067 / DSM 2661 / JAL-1 / JCM 10045 / NBRC 100440) (Methanococcus jannaschii).